A 508-amino-acid chain; its full sequence is Histidine ammonia-lyase (508 aa).

A cross-link (5-imidazolinone (Ala-Gly)) is located at residues 141-143 (ASG). Serine 142 carries the post-translational modification 2,3-didehydroalanine (Ser).

Belongs to the PAL/histidase family. In terms of processing, contains an active site 4-methylidene-imidazol-5-one (MIO), which is formed autocatalytically by cyclization and dehydration of residues Ala-Ser-Gly.

It localises to the cytoplasm. It carries out the reaction L-histidine = trans-urocanate + NH4(+). It participates in amino-acid degradation; L-histidine degradation into L-glutamate; N-formimidoyl-L-glutamate from L-histidine: step 1/3. The chain is Histidine ammonia-lyase from Geobacillus sp. (strain WCH70).